The primary structure comprises 210 residues: T-cell surface glycoprotein CD8 beta chain (210 aa).

Positions 1–21 (MRPRLWLLLAAQLTVLHGNSV) are cleaved as a signal peptide. The region spanning 22-132 (LQQTPAYIKV…ELTFGKGTQL (111 aa)) is the Ig-like V-type domain. Residues 22–170 (LQQTPAYIKV…ETQKGPLCSP (149 aa)) lie on the Extracellular side of the membrane. Cysteines 41 and 116 form a disulfide. N102 carries an N-linked (GlcNAc...) asparagine glycan. Residues 171–191 (ITLGLLVAGVLVLLVSLGVAI) form a helical membrane-spanning segment. The Cytoplasmic segment spans residues 192 to 210 (HLCCRRRRARLRFMKQFYK). Y209 bears the Phosphotyrosine mark.

In terms of assembly, forms disulfide-linked heterodimers with CD8A at the cell surface. Interacts with CD3D; this interaction couples TCR-CD3 with CD8. Interacts with LCK. Post-translationally, phosphorylated as a consequence of T-cell activation. Palmitoylated at the cytoplasmic tail and thereby targets the heterodimer CD8A/CD8B to lipid rafts unlike CD8A homodimers. Isoform 1, isoform 3, isoform 5, isoform 6, isoform 7 and isoform 8 are expressed in both thymus and peripheral CD8+ T-cells. Expression of isoform 1 is higher in thymus CD8+ T-cells than in peripheral CD8+ T-cells. Expression of isoform 6 is higher in peripheral CD8+ T-cells than in thymus CD8+ T-cells.

It is found in the cell membrane. Its subcellular location is the secreted. Integral membrane glycoprotein that plays an essential role in the immune response and serves multiple functions in responses against both external and internal offenses. In T-cells, functions primarily as a coreceptor for MHC class I molecule:peptide complex. The antigens presented by class I peptides are derived from cytosolic proteins while class II derived from extracellular proteins. Interacts simultaneously with the T-cell receptor (TCR) and the MHC class I proteins presented by antigen presenting cells (APCs). In turn, recruits the Src kinase LCK to the vicinity of the TCR-CD3 complex. A palmitoylation site in the cytoplasmic tail of CD8B chain contributes to partitioning of CD8 into the plasma membrane lipid rafts where signaling proteins are enriched. Once LCK recruited, it initiates different intracellular signaling pathways by phosphorylating various substrates ultimately leading to lymphokine production, motility, adhesion and activation of cytotoxic T-lymphocytes (CTLs). Additionally, plays a critical role in thymic selection of CD8+ T-cells. This chain is T-cell surface glycoprotein CD8 beta chain (CD8B), found in Homo sapiens (Human).